The sequence spans 189 residues: Elongation factor P (189 aa).

Belongs to the elongation factor P family.

It localises to the cytoplasm. Its pathway is protein biosynthesis; polypeptide chain elongation. Functionally, involved in peptide bond synthesis. Stimulates efficient translation and peptide-bond synthesis on native or reconstituted 70S ribosomes in vitro. Probably functions indirectly by altering the affinity of the ribosome for aminoacyl-tRNA, thus increasing their reactivity as acceptors for peptidyl transferase. In Pseudomonas syringae pv. syringae (strain B728a), this protein is Elongation factor P.